The primary structure comprises 257 residues: NH(3)-dependent NAD(+) synthetase (257 aa).

Residue 28–35 (GISGGVDS) participates in ATP binding. Position 34 (Asp34) interacts with Mg(2+). Arg109 contributes to the deamido-NAD(+) binding site. Residue Thr129 coordinates ATP. Residue Glu134 participates in Mg(2+) binding. Deamido-NAD(+)-binding residues include Lys142 and Asp149. Residues Lys158 and Ser180 each coordinate ATP. 240–241 (HK) is a deamido-NAD(+) binding site.

Belongs to the NAD synthetase family. In terms of assembly, homodimer.

The enzyme catalyses deamido-NAD(+) + NH4(+) + ATP = AMP + diphosphate + NAD(+) + H(+). It functions in the pathway cofactor biosynthesis; NAD(+) biosynthesis; NAD(+) from deamido-NAD(+) (ammonia route): step 1/1. Its function is as follows. Catalyzes the ATP-dependent amidation of deamido-NAD to form NAD. Uses ammonia as a nitrogen source. This is NH(3)-dependent NAD(+) synthetase from Pyrococcus horikoshii (strain ATCC 700860 / DSM 12428 / JCM 9974 / NBRC 100139 / OT-3).